Reading from the N-terminus, the 510-residue chain is MLQIVGALILLIAGFAILRLLFRALISTASALAGLILLCLFGPALLAGYITERITRLFHIRWLAGVFLTIAGMIISFMWGLDGKHIALEAHTFDSVKFILTTALAGGLLAVPLQIKNIQQNGITPEDISKEINGYYCCFYTAFFLMACSACAPLIALQYDISPSLMWWGGLLYWLAALVTLLWAASQIQALKKLTCAISQTLEEQPVLNSKSWLTSLQNDYSLPDSLTERIWLTLISQRISRGELREFELADGNWLLNNAWYERNMAGFNEQLKENLSFTPDELKTLFRNRLNLSPEANDDFLDRCLDGGDWYPFSEGRRFVSFHHVDELRICASCGLTEVHHAPENHKPDPEWYCSSLCRETETLCQEIYERPYNSFISDATANGLILMKLPETWSTNEKMFASGGQGHGFAAERGNHIVDRVRLKNARILGDNNARNGADRLVSGTEIQTKYCSTAARSVGAAFDGQNGQYRYMGNNGPMQLEVPRDQYAGAVETMRNKIREGKVEER.

Residue Met1 is a topological domain, cytoplasmic. Residues 2–22 (LQIVGALILLIAGFAILRLLF) traverse the membrane as a helical segment. The Periplasmic segment spans residues 23-30 (RALISTAS). A helical membrane pass occupies residues 31-51 (ALAGLILLCLFGPALLAGYIT). The Cytoplasmic segment spans residues 52-61 (ERITRLFHIR). The chain crosses the membrane as a helical span at residues 62–82 (WLAGVFLTIAGMIISFMWGLD). The Periplasmic portion of the chain corresponds to 83–94 (GKHIALEAHTFD). Residues 95-115 (SVKFILTTALAGGLLAVPLQI) traverse the membrane as a helical segment. The Cytoplasmic segment spans residues 116–136 (KNIQQNGITPEDISKEINGYY). A helical transmembrane segment spans residues 137–157 (CCFYTAFFLMACSACAPLIAL). Residues 158 to 164 (QYDISPS) are Periplasmic-facing. A helical membrane pass occupies residues 165 to 185 (LMWWGGLLYWLAALVTLLWAA). The Cytoplasmic segment spans residues 186-510 (SQIQALKKLT…KIREGKVEER (325 aa)).

The protein resides in the cell inner membrane. This chain is Inner membrane protein YeeR (yeeR), found in Escherichia coli (strain K12).